A 184-amino-acid chain; its full sequence is Putative manganese efflux pump MntP (184 aa).

Helical transmembrane passes span 3–23 (LLSM…ISVS), 36–56 (ALIS…LGWV), 65–85 (VSAL…LKMI), 103–123 (LLVL…SFAL), 126–146 (ISIW…SLAG), and 163–183 (ALGG…NVSF).

This sequence belongs to the MntP (TC 9.B.29) family.

It localises to the cell membrane. In terms of biological role, probably functions as a manganese efflux pump. The sequence is that of Putative manganese efflux pump MntP from Methanothermobacter thermautotrophicus (strain ATCC 29096 / DSM 1053 / JCM 10044 / NBRC 100330 / Delta H) (Methanobacterium thermoautotrophicum).